The following is a 198-amino-acid chain: Endonuclease V (198 aa).

Positions 38 and 101 each coordinate Mg(2+).

Belongs to the endonuclease V family. Mg(2+) serves as cofactor.

The protein localises to the cytoplasm. It catalyses the reaction Endonucleolytic cleavage at apurinic or apyrimidinic sites to products with a 5'-phosphate.. Functionally, DNA repair enzyme involved in the repair of deaminated bases. Selectively cleaves double-stranded DNA at the second phosphodiester bond 3' to a deoxyinosine leaving behind the intact lesion on the nicked DNA. The chain is Endonuclease V from Saccharolobus islandicus (strain Y.N.15.51 / Yellowstone #2) (Sulfolobus islandicus).